Reading from the N-terminus, the 550-residue chain is 2-succinyl-5-enolpyruvyl-6-hydroxy-3-cyclohexene-1-carboxylate synthase (550 aa).

Belongs to the TPP enzyme family. MenD subfamily. In terms of assembly, homodimer. Requires Mg(2+) as cofactor. Mn(2+) serves as cofactor. Thiamine diphosphate is required as a cofactor.

The enzyme catalyses isochorismate + 2-oxoglutarate + H(+) = 5-enolpyruvoyl-6-hydroxy-2-succinyl-cyclohex-3-ene-1-carboxylate + CO2. It functions in the pathway quinol/quinone metabolism; 1,4-dihydroxy-2-naphthoate biosynthesis; 1,4-dihydroxy-2-naphthoate from chorismate: step 2/7. The protein operates within quinol/quinone metabolism; menaquinone biosynthesis. In terms of biological role, catalyzes the thiamine diphosphate-dependent decarboxylation of 2-oxoglutarate and the subsequent addition of the resulting succinic semialdehyde-thiamine pyrophosphate anion to isochorismate to yield 2-succinyl-5-enolpyruvyl-6-hydroxy-3-cyclohexene-1-carboxylate (SEPHCHC). This Desulfitobacterium hafniense (strain DSM 10664 / DCB-2) protein is 2-succinyl-5-enolpyruvyl-6-hydroxy-3-cyclohexene-1-carboxylate synthase.